We begin with the raw amino-acid sequence, 530 residues long: Formate--tetrahydrofolate ligase (530 aa).

An ATP-binding site is contributed by 46–53; it reads TPEGEGKT.

This sequence belongs to the formate--tetrahydrofolate ligase family.

It catalyses the reaction (6S)-5,6,7,8-tetrahydrofolate + formate + ATP = (6R)-10-formyltetrahydrofolate + ADP + phosphate. The protein operates within one-carbon metabolism; tetrahydrofolate interconversion. This is Formate--tetrahydrofolate ligase from Malacoplasma penetrans (strain HF-2) (Mycoplasma penetrans).